The sequence spans 4034 residues: Polyketide synthase-nonribosomal peptide synthetase ACE1 (4034 aa).

The region spanning 10–448 (TEPIAIIGSG…GANAHVILES (439 aa)) is the Ketosynthase family 3 (KS3) domain. Catalysis depends on for beta-ketoacyl synthase activity residues Cys183, His322, and His368. The acyl transferase stretch occupies residues 560–879 (VFTGQGAQWA…PYFGCLSRGT (320 aa)). The segment at 951-1082 (NELLGTRLPD…GDLVVLLGEP (132 aa)) is N-terminal hotdog fold. The PKS/mFAS DH domain maps to 951–1257 (NELLGTRLPD…TKPLSPPSAA (307 aa)). The tract at residues 952–1252 (ELLGTRLPDD…LQGLHTKPLS (301 aa)) is dehydratase (DH) domain. Residue His983 is the Proton acceptor; for dehydratase activity of the active site. The interval 1097–1257 (MKDIDEERFY…TKPLSPPSAA (161 aa)) is C-terminal hotdog fold. The active-site Proton donor; for dehydratase activity is Asp1157. The tract at residues 1396-1594 (NMLNRFYSDA…SGADIVTPHH (199 aa)) is methyltransferase (MT) domain. Residues 2144–2317 (TYWLVGLTGG…AGSSVEIGCI (174 aa)) form a ketoreductase (KR)domain region. A Carrier 1 domain is found at 2424–2505 (KSSEEVLDIL…LLLEFVQGLI (82 aa)). Ser2465 bears the O-(pantetheine 4'-phosphoryl)serine mark. The disordered stretch occupies residues 2512–2598 (KLDGSDGADA…SPTTSASMAS (87 aa)). Positions 2556–2577 (PSGPASPTSPSSATASPGRSRS) are enriched in low complexity. Over residues 2586 to 2598 (TPVSPTTSASMAS) the composition is skewed to polar residues. The condensation stretch occupies residues 2608 to 3037 (TVPVSFGQSR…ATSLNRPAIY (430 aa)). The adenylation stretch occupies residues 3073 to 3473 (KYATKFALRN…GGLIIEGRID (401 aa)). The region spanning 3598–3678 (AELGSDQARM…AMTDLVLSDD (81 aa)) is the Carrier 2 domain. Ser3638 bears the O-(pantetheine 4'-phosphoryl)serine mark. The interval 3719–3944 (LTGATGFLGR…DFVSVENVAA (226 aa)) is reductase-like.

It belongs to the NRP synthetase family.

The protein localises to the cytoplasm. It functions in the pathway secondary metabolite biosynthesis. In terms of biological role, hybrid PKS-NRPS synthetase; part of the gene cluster that mediates the biosynthesis of a tyrosine-derived cytochalasan acting as a fungal signal recognized by resistant rice plants and leads to avirulence in Pi33 resistant rice cultivars. The first step in the pathway is catalyzed by the hybrid PKS-NRPS ACE1, assisted by the enoyl reductase RAP1, that are responsible for fusion of the tyrosine precursor and the polyketide backbone. The polyketide synthase module (PKS) of ACE1 is responsible for the synthesis of the polyketide backbone and the downstream nonribosomal peptide synthetase (NRPS) amidates the carboxyl end of the polyketide with the tyrosine precursor. Because ACE1 lacks a designated enoylreductase (ER) domain, the required activity is provided the enoyl reductase RAP1. Reduction by the hydrolyase ORFZ, followed by dehydration and intra-molecular Diels-Alder cyclization by the Diels-Alderase ORF3 then yield the required isoindolone-fused macrocycle. A number of oxidative steps catalyzed by the tailoring enzymes identified within the cluster, including cytochrome P450 monooxygenases CYP1 to CYP4, the FAD-linked oxidoreductase OXR2 and the short-chain dehydrogenase/reductase OXR1, are further required to afford the final cytochalasans that confer avirulence and which have still to be identified. The monooxygenase CYP1 has been shown to be a site-selective C-18 hydroxylase whereas the function of CYP3 is the site-selective epoxidation of the C-6/C-7 olefin that is present in some intermediate compounds. Finally, SYN2 and RAP2 are not required for avirulence in Pi33 resistant rice cultivars. The sequence is that of Polyketide synthase-nonribosomal peptide synthetase ACE1 from Pyricularia oryzae (strain 70-15 / ATCC MYA-4617 / FGSC 8958) (Rice blast fungus).